The chain runs to 105 residues: Large ribosomal subunit protein uL24 (105 aa).

The protein belongs to the universal ribosomal protein uL24 family. In terms of assembly, part of the 50S ribosomal subunit.

In terms of biological role, one of two assembly initiator proteins, it binds directly to the 5'-end of the 23S rRNA, where it nucleates assembly of the 50S subunit. One of the proteins that surrounds the polypeptide exit tunnel on the outside of the subunit. In Vibrio vulnificus (strain YJ016), this protein is Large ribosomal subunit protein uL24.